A 300-amino-acid chain; its full sequence is uncharacterized protein (300 aa).

Residues 67 to 179 (LAFEELEKEK…IAKANELKDS (113 aa)) adopt a coiled-coil conformation. Positions 203–285 (STTASLSQSE…PSSQSTYQQQ (83 aa)) are enriched in low complexity. A disordered region spans residues 203 to 300 (STTASLSQSE…KGFFARLFNL (98 aa)).

This is an uncharacterized protein from Staphylococcus epidermidis (strain ATCC 12228 / FDA PCI 1200).